The chain runs to 57 residues: Large ribosomal subunit protein bL32 (57 aa).

This sequence belongs to the bacterial ribosomal protein bL32 family.

This Lysinibacillus sphaericus (strain C3-41) protein is Large ribosomal subunit protein bL32.